The primary structure comprises 163 residues: Putative pre-16S rRNA nuclease (163 aa).

This sequence belongs to the YqgF nuclease family.

The protein resides in the cytoplasm. Could be a nuclease involved in processing of the 5'-end of pre-16S rRNA. The sequence is that of Putative pre-16S rRNA nuclease from Rhodopseudomonas palustris (strain BisB18).